The sequence spans 217 residues: Somatotropin (217 aa).

A signal peptide spans Met-1–Gly-26. His-46 serves as a coordination point for Zn(2+). Cysteines 79 and 190 form a disulfide. At Ser-132 the chain carries Phosphoserine. Glu-199 is a binding site for Zn(2+). Residues Cys-207 and Cys-215 are joined by a disulfide bond.

This sequence belongs to the somatotropin/prolactin family.

Its subcellular location is the secreted. Plays an important role in growth control. Its major role in stimulating body growth is to stimulate the liver and other tissues to secrete IGF1. It stimulates both the differentiation and proliferation of myoblasts. It also stimulates amino acid uptake and protein synthesis in muscle and other tissues. This chain is Somatotropin (GH1), found in Bubalus bubalis (Domestic water buffalo).